The sequence spans 300 residues: Ribosomal RNA small subunit methyltransferase A (300 aa).

Positions 36, 38, 63, 84, 113, and 131 each coordinate S-adenosyl-L-methionine.

This sequence belongs to the class I-like SAM-binding methyltransferase superfamily. rRNA adenine N(6)-methyltransferase family. RsmA subfamily.

It localises to the cytoplasm. The enzyme catalyses adenosine(1518)/adenosine(1519) in 16S rRNA + 4 S-adenosyl-L-methionine = N(6)-dimethyladenosine(1518)/N(6)-dimethyladenosine(1519) in 16S rRNA + 4 S-adenosyl-L-homocysteine + 4 H(+). Its function is as follows. Specifically dimethylates two adjacent adenosines (A1518 and A1519) in the loop of a conserved hairpin near the 3'-end of 16S rRNA in the 30S particle. May play a critical role in biogenesis of 30S subunits. This Kineococcus radiotolerans (strain ATCC BAA-149 / DSM 14245 / SRS30216) protein is Ribosomal RNA small subunit methyltransferase A.